The chain runs to 95 residues: Aspartyl/glutamyl-tRNA(Asn/Gln) amidotransferase subunit C (95 aa).

The protein belongs to the GatC family. In terms of assembly, heterotrimer of A, B and C subunits.

It catalyses the reaction L-glutamyl-tRNA(Gln) + L-glutamine + ATP + H2O = L-glutaminyl-tRNA(Gln) + L-glutamate + ADP + phosphate + H(+). The enzyme catalyses L-aspartyl-tRNA(Asn) + L-glutamine + ATP + H2O = L-asparaginyl-tRNA(Asn) + L-glutamate + ADP + phosphate + 2 H(+). Its function is as follows. Allows the formation of correctly charged Asn-tRNA(Asn) or Gln-tRNA(Gln) through the transamidation of misacylated Asp-tRNA(Asn) or Glu-tRNA(Gln) in organisms which lack either or both of asparaginyl-tRNA or glutaminyl-tRNA synthetases. The reaction takes place in the presence of glutamine and ATP through an activated phospho-Asp-tRNA(Asn) or phospho-Glu-tRNA(Gln). The polypeptide is Aspartyl/glutamyl-tRNA(Asn/Gln) amidotransferase subunit C (Caldanaerobacter subterraneus subsp. tengcongensis (strain DSM 15242 / JCM 11007 / NBRC 100824 / MB4) (Thermoanaerobacter tengcongensis)).